Consider the following 256-residue polypeptide: tRNA-cytidine(32) 2-sulfurtransferase (256 aa).

Positions 35-40 (SGGKDS) match the PP-loop motif motif. The [4Fe-4S] cluster site is built by Cys110, Cys113, and Cys201.

This sequence belongs to the TtcA family. As to quaternary structure, homodimer. Mg(2+) serves as cofactor. The cofactor is [4Fe-4S] cluster.

The protein resides in the cytoplasm. The enzyme catalyses cytidine(32) in tRNA + S-sulfanyl-L-cysteinyl-[cysteine desulfurase] + AH2 + ATP = 2-thiocytidine(32) in tRNA + L-cysteinyl-[cysteine desulfurase] + A + AMP + diphosphate + H(+). The protein operates within tRNA modification. Its function is as follows. Catalyzes the ATP-dependent 2-thiolation of cytidine in position 32 of tRNA, to form 2-thiocytidine (s(2)C32). The sulfur atoms are provided by the cysteine/cysteine desulfurase (IscS) system. The polypeptide is tRNA-cytidine(32) 2-sulfurtransferase (Coxiella burnetii (strain RSA 493 / Nine Mile phase I)).